Reading from the N-terminus, the 146-residue chain is Large ribosomal subunit protein bL21 (146 aa).

The tract at residues K115 to N146 is disordered. Over residues A128–N146 the composition is skewed to basic and acidic residues.

The protein belongs to the bacterial ribosomal protein bL21 family. As to quaternary structure, part of the 50S ribosomal subunit. Contacts protein L20.

Functionally, this protein binds to 23S rRNA in the presence of protein L20. This Prochlorococcus marinus (strain MIT 9312) protein is Large ribosomal subunit protein bL21.